The chain runs to 929 residues: Bifunctional uridylyltransferase/uridylyl-removing enzyme (929 aa).

Positions 1-379 (MSPSRPAADE…RPAAKRRRVP (379 aa)) are uridylyltransferase. The tract at residues 380–735 (ESDDFVIDNN…VGFDEARAVT (356 aa)) is uridylyl-removing. Positions 495-618 (VDEHLIRCVG…VETVEQMKML (124 aa)) constitute an HD domain. ACT domains lie at 736–818 (ELTI…AVAR) and 849–929 (VIEV…KPAA).

It belongs to the GlnD family. The cofactor is Mg(2+).

It catalyses the reaction [protein-PII]-L-tyrosine + UTP = [protein-PII]-uridylyl-L-tyrosine + diphosphate. It carries out the reaction [protein-PII]-uridylyl-L-tyrosine + H2O = [protein-PII]-L-tyrosine + UMP + H(+). With respect to regulation, uridylyltransferase (UTase) activity is inhibited by glutamine, while glutamine activates uridylyl-removing (UR) activity. Its function is as follows. Modifies, by uridylylation and deuridylylation, the PII regulatory proteins (GlnB and homologs), in response to the nitrogen status of the cell that GlnD senses through the glutamine level. Under low glutamine levels, catalyzes the conversion of the PII proteins and UTP to PII-UMP and PPi, while under higher glutamine levels, GlnD hydrolyzes PII-UMP to PII and UMP (deuridylylation). Thus, controls uridylylation state and activity of the PII proteins, and plays an important role in the regulation of nitrogen fixation and metabolism. This chain is Bifunctional uridylyltransferase/uridylyl-removing enzyme, found in Rhodopseudomonas palustris (strain ATCC BAA-98 / CGA009).